Here is a 200-residue protein sequence, read N- to C-terminus: NADH-quinone oxidoreductase subunit C (200 aa).

The protein belongs to the complex I 30 kDa subunit family. In terms of assembly, NDH-1 is composed of 14 different subunits. Subunits NuoB, C, D, E, F, and G constitute the peripheral sector of the complex.

It localises to the cell inner membrane. The catalysed reaction is a quinone + NADH + 5 H(+)(in) = a quinol + NAD(+) + 4 H(+)(out). In terms of biological role, NDH-1 shuttles electrons from NADH, via FMN and iron-sulfur (Fe-S) centers, to quinones in the respiratory chain. The immediate electron acceptor for the enzyme in this species is believed to be ubiquinone. Couples the redox reaction to proton translocation (for every two electrons transferred, four hydrogen ions are translocated across the cytoplasmic membrane), and thus conserves the redox energy in a proton gradient. The polypeptide is NADH-quinone oxidoreductase subunit C (Ruegeria pomeroyi (strain ATCC 700808 / DSM 15171 / DSS-3) (Silicibacter pomeroyi)).